We begin with the raw amino-acid sequence, 497 residues long: Galactose-1-phosphate uridylyltransferase (497 aa).

Belongs to the galactose-1-phosphate uridylyltransferase type 2 family.

It is found in the cytoplasm. The catalysed reaction is alpha-D-galactose 1-phosphate + UDP-alpha-D-glucose = alpha-D-glucose 1-phosphate + UDP-alpha-D-galactose. It participates in carbohydrate metabolism; galactose metabolism. This chain is Galactose-1-phosphate uridylyltransferase, found in Clostridium acetobutylicum (strain ATCC 824 / DSM 792 / JCM 1419 / IAM 19013 / LMG 5710 / NBRC 13948 / NRRL B-527 / VKM B-1787 / 2291 / W).